The sequence spans 338 residues: Glycerol-3-phosphate dehydrogenase [NAD(P)+] (338 aa).

3 residues coordinate NADPH: serine 13, tryptophan 14, and lysine 108. Lysine 108, glycine 139, and serine 141 together coordinate sn-glycerol 3-phosphate. Alanine 143 contacts NADPH. Sn-glycerol 3-phosphate is bound by residues lysine 194, aspartate 247, serine 257, arginine 258, and asparagine 259. The active-site Proton acceptor is the lysine 194. Arginine 258 is an NADPH binding site. 2 residues coordinate NADPH: valine 282 and glutamate 284.

The protein belongs to the NAD-dependent glycerol-3-phosphate dehydrogenase family.

The protein resides in the cytoplasm. It carries out the reaction sn-glycerol 3-phosphate + NAD(+) = dihydroxyacetone phosphate + NADH + H(+). It catalyses the reaction sn-glycerol 3-phosphate + NADP(+) = dihydroxyacetone phosphate + NADPH + H(+). Its pathway is membrane lipid metabolism; glycerophospholipid metabolism. Functionally, catalyzes the reduction of the glycolytic intermediate dihydroxyacetone phosphate (DHAP) to sn-glycerol 3-phosphate (G3P), the key precursor for phospholipid synthesis. The polypeptide is Glycerol-3-phosphate dehydrogenase [NAD(P)+] (Streptococcus uberis (strain ATCC BAA-854 / 0140J)).